The following is a 2057-amino-acid chain: Rho guanine nucleotide exchange factor 17 (2057 aa).

Disordered stretches follow at residues 20 to 361, 375 to 461, and 481 to 559; these read ERWS…DTGG, LASP…SNPD, and RVRK…LKPS. S142 and S152 each carry phosphoserine. Positions 227–249 are enriched in low complexity; the sequence is ARASSSSSIASSYPVSRSRAASS. A phosphoserine mark is found at S305 and S308. Gly residues predominate over residues 314–323; the sequence is GGLGSAGGVG. 7 positions are modified to phosphoserine: S324, S330, S377, S381, S389, S404, and S414. The segment covering 382 to 391 has biased composition (polar residues); sequence RGSSRYSSTE. Residues 440-451 show a composition bias toward basic and acidic residues; the sequence is PLRDGGLDLDKN. A Phosphoserine modification is found at S456. Low complexity predominate over residues 507 to 524; sequence EQSESTLSQSPTSPTTRP. Residues S538 and S611 each carry the phosphoserine modification. Disordered regions lie at residues 615 to 647 and 663 to 952; these read AGDM…PEPL and LSST…VRHA. Residues 663–672 are compositionally biased toward polar residues; it reads LSSTSAQTNH. S689 is modified (phosphoserine). T692 and T695 each carry phosphothreonine. Polar residues predominate over residues 710 to 719; it reads PNGTELSNGE. Position 728 is a phosphoserine (S728). Positions 747–760 are enriched in polar residues; it reads SVDSNLLGSLNSKT. A compositionally biased stretch (basic and acidic residues) spans 820–829; that stretch reads SLSDPSRRGE. S906 carries the phosphoserine modification. Over residues 909-920 the composition is skewed to basic residues; sequence LTRRGSKKRPAR. Positions 922–931 are enriched in basic and acidic residues; it reads SHQELRREEG. Positions 933–944 are enriched in polar residues; the sequence is QDQTGSLTQTRS. Phosphoserine is present on residues S953 and S994. Residues 1015 to 1027 show a composition bias toward pro residues; the sequence is GPVDLPCLPPSAP. The interval 1015–1054 is disordered; that stretch reads GPVDLPCLPPSAPPSTETKPSGAARATPDEPAPASKCCSK. In terms of domain architecture, DH spans 1059-1247; that stretch reads MRKHVTMTLL…KQVAERINKG (189 aa). S1324 is subject to Phosphoserine. Disordered stretches follow at residues 1555–1713 and 1983–2050; these read RCPR…SSRG and CSTP…DSTN. Residues 1579–1589 show a composition bias toward acidic residues; that stretch reads LDVEATAEEEA. Over residues 1638-1674 the composition is skewed to low complexity; sequence SPSPSGTLQSQASQSTISSSFGNEETPSSKEATAETT.

In terms of biological role, acts as a guanine nucleotide exchange factor (GEF) for RhoA GTPases. In Mus musculus (Mouse), this protein is Rho guanine nucleotide exchange factor 17 (Arhgef17).